The sequence spans 1985 residues: Histone-lysine N-methyltransferase SETD1B (1985 aa).

A compositionally biased stretch (basic residues) spans 1–11 (MENSHPHHHHQ). The tract at residues 1 to 25 (MENSHPHHHHQQPPPQPGPSGERRN) is disordered. An interaction with WDR82 region spans residues 67-97 (VEDPRVVGIWTKNKELELSVPKFKIDEFYVG). Residues 92-180 (DEFYVGPVPP…NIIHVELDTK (89 aa)) form the RRM domain. 5 disordered regions span residues 234–304 (GCGS…QDPT), 353–710 (GSSG…PPPA), 955–1480 (VKRK…RTGP), 1519–1624 (QLPP…STKL), and 1658–1687 (RGPWRRPPKKRHEDLVAPSASPEPSPPQPL). Composition is skewed to polar residues over residues 242–258 (VTPNSGGTPFSQDTAYS), 264–273 (TPNSYGQGTP), 281–304 (PFSQDSSYSSRQPTPSYLFSQDPT), and 353–365 (GSSGTPFKAQSQD). A compositionally biased stretch (low complexity) spans 366–381 (ATTFAHTPPPAQTATA). Composition is skewed to pro residues over residues 393 to 404 (TPAPPFPPPPEE), 423 to 433 (PAPPPLPPAEP), and 440 to 449 (GTPPGPPPPD). Residues 484–512 (EKPHDSLDSRIEMLLKEQRTKLPFLREQD) show a composition bias toward basic and acidic residues. Residues 522–535 (SPISSSSSQLSPLS) are compositionally biased toward low complexity. A compositionally biased stretch (pro residues) spans 583-594 (PRPPPEPGPPDP). Residues 628–637 (EDMEISDDEM) show a composition bias toward acidic residues. Over residues 650–669 (PMVVTPGAGAVAAPNVLAPN) the composition is skewed to low complexity. Residues 670–710 (LPLPPPPGFPPLPPPPPPPPPQPGFPMPPPLPPPPPPPPPA) show a composition bias toward pro residues. Phosphoserine occurs at positions 977 and 985. The span at 986 to 1006 (ERERDRDIADAPCELTKRDPK) shows a compositional bias: basic and acidic residues. At serine 1022 the chain carries Phosphoserine. Residues 1032-1055 (LSASSSSSASSSSGSSTTSPSSSA) show a composition bias toward low complexity. A compositionally biased stretch (acidic residues) spans 1058-1083 (KEEEDRESTEEEEEEEEEEAEEEEEE). Residues 1087 to 1097 (SRISSPSSSSS) are compositionally biased toward low complexity. The segment covering 1100 to 1120 (KDDEDDNEADSDGQIDSDIDD) has biased composition (acidic residues). A compositionally biased stretch (low complexity) spans 1143–1178 (SITTSKAPAESSSSSSESSGSSEFESSSESESSSSS). A compositionally biased stretch (acidic residues) spans 1179–1202 (SEDEEEMTVPGVEEEEEEEEEEEK). Low complexity predominate over residues 1205–1217 (AMAAATVVAMAEE). A compositionally biased stretch (acidic residues) spans 1247–1261 (GTEEEVDIEAEDEVP). 3 positions are modified to phosphoserine: serine 1283, serine 1301, and serine 1354. Over residues 1331 to 1373 (EPPPMLSLPLQPPLPPPRLLRPPSPPPEPETPEPPKPPVPLEP) the composition is skewed to pro residues. Low complexity predominate over residues 1402-1442 (PGGEPPLSGSSSGLSLSSPQVPGSPFSYPSPSPGLSSGGLP). Over residues 1535–1544 (IKRKPGRPRR) the composition is skewed to basic residues. Pro residues-rich tracts occupy residues 1600–1619 (PAPPPPLPPQPPPPPPPPPV) and 1678–1687 (SPEPSPPQPL). Serine 1678 and serine 1682 each carry phosphoserine. Residues 1764 to 1769 (GCARSE) carry the WDR5 interaction motif (WIN) motif. The segment at 1786–1819 (SRASTDEPPMDTQGMSIPAQPHASTRAGSERRSE) is disordered. A RxxxRR motif motif is present at residues 1817–1822 (RSEQRR). Residues 1846–1963 (KKLKFCKSHI…VNEEITYDYK (118 aa)) enclose the SET domain. Tyrosine 1962 is a binding site for S-adenosyl-L-methionine. One can recognise a Post-SET domain in the interval 1969-1985 (VKIPCLCGSENCRGTLN).

This sequence belongs to the class V-like SAM-binding methyltransferase superfamily. Component of the SET1B/COMPASS complex composed of the catalytic subunit SETD1B, WDR5, WDR82, RBBP5, ASH2L/ASH2, CXXC1/CFP1, HCFC1, DPY30 homotrimer and BOD1. Forms a core complex with the evolutionary conserved subcomplex WRAD composed of WDR5, RBBP5, ASH2L/ASH2 and DPY30 subunits; WRAD differentially stimulates the methyltransferase activity. Interacts with HCFC1 and ASH2L/ASH2. Interacts (via the RRM domain) with WDR82. Interacts (via the RRM domain) with hyperphosphorylated C-terminal domain (CTD) of RNA polymerase II large subunit (POLR2A) only in the presence of WDR82. Binds specifically to CTD heptad repeats phosphorylated on 'Ser-5' of each heptad. Interacts with RBM15. Interacts (via WIN motif) with WDR5. Widely expressed.

It localises to the nucleus. The protein localises to the nucleus speckle. The protein resides in the chromosome. It is found in the cytoplasm. The enzyme catalyses L-lysyl(4)-[histone H3] + S-adenosyl-L-methionine = N(6)-methyl-L-lysyl(4)-[histone H3] + S-adenosyl-L-homocysteine + H(+). The catalysed reaction is N(6)-methyl-L-lysyl(4)-[histone H3] + S-adenosyl-L-methionine = N(6),N(6)-dimethyl-L-lysyl(4)-[histone H3] + S-adenosyl-L-homocysteine + H(+). It carries out the reaction N(6),N(6)-dimethyl-L-lysyl(4)-[histone H3] + S-adenosyl-L-methionine = N(6),N(6),N(6)-trimethyl-L-lysyl(4)-[histone H3] + S-adenosyl-L-homocysteine + H(+). Functionally, histone methyltransferase that catalyzes methyl group transfer from S-adenosyl-L-methionine to the epsilon-amino group of 'Lys-4' of histone H3 (H3K4) via a non-processive mechanism. Part of chromatin remodeling machinery, forms H3K4me1, H3K4me2 and H3K4me3 methylation marks at active chromatin sites where transcription and DNA repair take place. Plays an essential role in regulating the transcriptional programming of multipotent hematopoietic progenitor cells and lymphoid lineage specification during hematopoiesis. This Mus musculus (Mouse) protein is Histone-lysine N-methyltransferase SETD1B (Setd1b).